The primary structure comprises 57 residues: Large ribosomal subunit protein bL32 (57 aa).

Basic residues predominate over residues 1-19; the sequence is MATPKRRMSRANTRSRRSQ. Residues 1–21 are disordered; that stretch reads MATPKRRMSRANTRSRRSQWK.

Belongs to the bacterial ribosomal protein bL32 family.

The protein is Large ribosomal subunit protein bL32 of Mycobacterium ulcerans (strain Agy99).